The primary structure comprises 842 residues: Elongation factor 2 (842 aa).

A tr-type G domain is found at 17–253 (TNVRNMSVIA…LWGDSYFNPK (237 aa)). Residues 26 to 33 (AHVDHGKS), 158 to 161 (NKVD), and 213 to 215 (SGL) contribute to the GTP site. His-699 carries the diphthamide modification.

Belongs to the TRAFAC class translation factor GTPase superfamily. Classic translation factor GTPase family. EF-G/EF-2 subfamily.

The protein localises to the cytoplasm. The enzyme catalyses GTP + H2O = GDP + phosphate + H(+). In terms of biological role, catalyzes the GTP-dependent ribosomal translocation step during translation elongation. During this step, the ribosome changes from the pre-translocational (PRE) to the post-translocational (POST) state as the newly formed A-site-bound peptidyl-tRNA and P-site-bound deacylated tRNA move to the P and E sites, respectively. Catalyzes the coordinated movement of the two tRNA molecules, the mRNA and conformational changes in the ribosome. The chain is Elongation factor 2 (EFT1) from Eremothecium gossypii (strain ATCC 10895 / CBS 109.51 / FGSC 9923 / NRRL Y-1056) (Yeast).